The chain runs to 1148 residues: Replication factor C subunit 1 (1148 aa).

Residues 46-56 show a composition bias toward basic and acidic residues; sequence NSSRKEDDFKQ. 2 disordered regions span residues 46 to 201 and 228 to 380; these read NSSR…LNDE and TLAM…TNYQ. A Glycyl lysine isopeptide (Lys-Gly) (interchain with G-Cter in SUMO2) cross-link involves residue K50. Residue Y67 is modified to Phosphotyrosine. 4 positions are modified to phosphoserine: S69, S71, S73, and S108. Position 110 is a phosphothreonine (T110). The segment covering 130–141 has biased composition (polar residues); the sequence is RSTNSHLGTSNM. S156 carries the phosphoserine modification. 2 positions are modified to phosphothreonine: T161 and T163. A phosphoserine mark is found at S164, S173, and S190. Basic and acidic residues predominate over residues 234–246; sequence EEPKTKKARKDTE. S253 is modified (phosphoserine). Residues 262 to 271 are compositionally biased toward basic residues; the sequence is EKHKYPHKVK. Phosphoserine occurs at positions 281 and 283. Positions 288 to 308 are enriched in basic and acidic residues; it reads SKYESSKESQQHSKSSADKIG. S312 is subject to Phosphoserine. Basic and acidic residues-rich tracts occupy residues 323 to 353 and 362 to 376; these read KRKEESSYKEIEPVASKRKENAIKLKGETKT and AKKESVSPEDSEKKR. S368 carries the post-translational modification Phosphoserine. A BRCT domain is found at 402-492; it reads GAENCLEGLI…PGKKSKYEIA (91 aa). Basic and acidic residues-rich tracts occupy residues 496–507 and 520–538; these read EMKKESKLERTP and SKKESESKKSRPTSKRDSL. A disordered region spans residues 496–538; sequence EMKKESKLERTPQKNVQGKRKISPSKKESESKKSRPTSKRDSL. At S537 the chain carries Phosphoserine. 650 to 657 is a binding site for ATP; sequence SGPPGVGK. The tract at residues 1081-1148 is disordered; the sequence is KASRHSTSPS…RKGKGKSSKK (68 aa). Residues 1094 to 1105 show a composition bias toward acidic residues; that stretch reads EYNEELNEDDSQ. Phosphoserine occurs at positions 1104 and 1106. Positions 1120 to 1124 match the Nuclear localization signal motif; the sequence is IKKKT. Basic and acidic residues predominate over residues 1130-1140; the sequence is SKPEKDKEPRK.

Belongs to the activator 1 large subunit family. In terms of assembly, large subunit of the RFC complex, an heteropentameric complex consisting of RFC1 and four small subunits RFC2, RFC3, RFC4 and RFC5; the RFC complex interacts with PCNA and the interaction involves RFC1. As to expression, wide tissue distribution. Undetectable in placental tissue.

The protein localises to the nucleus. Its function is as follows. Subunit of the replication factor C (RFC) complex which acts during elongation of primed DNA templates by DNA polymerases delta and epsilon, and is necessary for ATP-dependent loading of proliferating cell nuclear antigen (PCNA) onto primed DNA. This subunit binds to the primer-template junction. Binds the PO-B transcription element as well as other GA rich DNA sequences. Can bind single- or double-stranded DNA. This Homo sapiens (Human) protein is Replication factor C subunit 1 (RFC1).